Consider the following 105-residue polypeptide: Nitrogen fixation nifHD region GlnB-like protein 1 (105 aa).

This sequence belongs to the P(II) protein family.

In terms of biological role, could be involved in the regulation of nitrogen fixation. The polypeptide is Nitrogen fixation nifHD region GlnB-like protein 1 (glnBA) (Methanothermococcus thermolithotrophicus (Methanococcus thermolithotrophicus)).